The chain runs to 588 residues: Zeta-carotene desaturase, chloroplastic/chromoplastic (588 aa).

The transit peptide at 1-49 directs the protein to the chloroplast and chromoplast; sequence MATCSAYLCCPATSASLKKRVFPDGSAGFLFFGGRRLSNRLVTPKSVIR.

This sequence belongs to the zeta carotene desaturase family. In terms of assembly, monomer and dimer. Decylplastoquinone serves as cofactor. Requires 6-decylubiquinone as cofactor.

It localises to the plastid. Its subcellular location is the chloroplast. The protein localises to the chromoplast. It carries out the reaction 9,9'-di-cis-zeta-carotene + 2 a quinone = 7,7',9,9'-tetra-cis-lycopene + 2 a quinol. It functions in the pathway carotenoid biosynthesis; lycopene biosynthesis. In terms of biological role, catalyzes the conversion of zeta-carotene to lycopene via the intermediary of neurosporene. It carries out two consecutive desaturations (introduction of double bonds) at positions C-7 and C-7'. Shows stereoselectivity toward trans C15-C15'zeta-carotene double bond. The zeta-carotene produced by the phytoene desaturase PDS has a C15-C15' double bond in the cis configuration and it requires isomerization before being recognized as substrate by ZDS. No activity with all-trans-zeta-carotene. The main product is 7,9,7',9'-tetra-cis-lycopene (pro-lycopene). This is Zeta-carotene desaturase, chloroplastic/chromoplastic (ZDS) from Capsicum annuum (Capsicum pepper).